A 250-amino-acid polypeptide reads, in one-letter code: uncharacterized protein (250 aa).

Helical transmembrane passes span valine 36–valine 56, proline 73–methionine 93, alanine 101–leucine 121, valine 128–threonine 148, phenylalanine 156–phenylalanine 176, proline 180–tyrosine 200, and phenylalanine 225–phenylalanine 245.

It belongs to the BI1 family.

It localises to the cell membrane. This is an uncharacterized protein from Caulobacter vibrioides (strain ATCC 19089 / CIP 103742 / CB 15) (Caulobacter crescentus).